A 214-amino-acid chain; its full sequence is Single-pass membrane and coiled-coil domain-containing protein 1 (214 aa).

A coiled-coil region spans residues 6–42 (TTLISLKEAMKRVDHKLQALETQFKELDFTKDNLMQK). Residues 65–81 (ALQLTSMELNILYSYVI) form a helical membrane-spanning segment.

The protein localises to the membrane. The sequence is that of Single-pass membrane and coiled-coil domain-containing protein 1 (SMCO1) from Homo sapiens (Human).